Consider the following 183-residue polypeptide: Lipid droplet coating protein mpl1 (183 aa).

Belongs to the perilipin family.

It localises to the lipid droplet. Functionally, lipid droplet coating protein that regulates lipid metabolism, appressorial turgor pressure, and virulence. Appressorial turgor pressure is important for breaching the insect cuticle during infection. This is Lipid droplet coating protein mpl1 from Metarhizium robertsii (strain ARSEF 23 / ATCC MYA-3075) (Metarhizium anisopliae (strain ARSEF 23)).